A 502-amino-acid polypeptide reads, in one-letter code: ATP synthase subunit alpha (502 aa).

Position 169-176 (169-176 (GDRQVGKT)) interacts with ATP.

The protein belongs to the ATPase alpha/beta chains family. As to quaternary structure, F-type ATPases have 2 components, CF(1) - the catalytic core - and CF(0) - the membrane proton channel. CF(1) has five subunits: alpha(3), beta(3), gamma(1), delta(1), epsilon(1). CF(0) has three main subunits: a(1), b(2) and c(9-12). The alpha and beta chains form an alternating ring which encloses part of the gamma chain. CF(1) is attached to CF(0) by a central stalk formed by the gamma and epsilon chains, while a peripheral stalk is formed by the delta and b chains.

It is found in the cell membrane. It catalyses the reaction ATP + H2O + 4 H(+)(in) = ADP + phosphate + 5 H(+)(out). Functionally, produces ATP from ADP in the presence of a proton gradient across the membrane. The alpha chain is a regulatory subunit. The chain is ATP synthase subunit alpha from Lysinibacillus sphaericus (strain C3-41).